The chain runs to 266 residues: 3-methyl-2-oxobutanoate hydroxymethyltransferase (266 aa).

Residues D45 and D84 each coordinate Mg(2+). 3-methyl-2-oxobutanoate-binding positions include 45 to 46 (DS), D84, and K112. Residue E114 coordinates Mg(2+). E181 (proton acceptor) is an active-site residue.

The protein belongs to the PanB family. Homodecamer; pentamer of dimers. Mg(2+) serves as cofactor.

The protein localises to the cytoplasm. The catalysed reaction is 3-methyl-2-oxobutanoate + (6R)-5,10-methylene-5,6,7,8-tetrahydrofolate + H2O = 2-dehydropantoate + (6S)-5,6,7,8-tetrahydrofolate. It participates in cofactor biosynthesis; (R)-pantothenate biosynthesis; (R)-pantoate from 3-methyl-2-oxobutanoate: step 1/2. In terms of biological role, catalyzes the reversible reaction in which hydroxymethyl group from 5,10-methylenetetrahydrofolate is transferred onto alpha-ketoisovalerate to form ketopantoate. This Pseudomonas syringae pv. syringae (strain B728a) protein is 3-methyl-2-oxobutanoate hydroxymethyltransferase.